The sequence spans 449 residues: tRNA-2-methylthio-N(6)-dimethylallyladenosine synthase (449 aa).

The MTTase N-terminal domain maps to lysine 3–serine 124. 6 residues coordinate [4Fe-4S] cluster: cysteine 12, cysteine 48, cysteine 87, cysteine 163, cysteine 167, and cysteine 170. One can recognise a Radical SAM core domain in the interval lysine 149–glutamate 380. One can recognise a TRAM domain in the interval glutamine 383 to proline 447.

It belongs to the methylthiotransferase family. MiaB subfamily. In terms of assembly, monomer. [4Fe-4S] cluster serves as cofactor.

Its subcellular location is the cytoplasm. The catalysed reaction is N(6)-dimethylallyladenosine(37) in tRNA + (sulfur carrier)-SH + AH2 + 2 S-adenosyl-L-methionine = 2-methylsulfanyl-N(6)-dimethylallyladenosine(37) in tRNA + (sulfur carrier)-H + 5'-deoxyadenosine + L-methionine + A + S-adenosyl-L-homocysteine + 2 H(+). In terms of biological role, catalyzes the methylthiolation of N6-(dimethylallyl)adenosine (i(6)A), leading to the formation of 2-methylthio-N6-(dimethylallyl)adenosine (ms(2)i(6)A) at position 37 in tRNAs that read codons beginning with uridine. This chain is tRNA-2-methylthio-N(6)-dimethylallyladenosine synthase, found in Orientia tsutsugamushi (strain Boryong) (Rickettsia tsutsugamushi).